A 249-amino-acid chain; its full sequence is Probable transcriptional regulatory protein DICTH_1505 (249 aa).

It belongs to the TACO1 family.

The protein resides in the cytoplasm. This chain is Probable transcriptional regulatory protein DICTH_1505, found in Dictyoglomus thermophilum (strain ATCC 35947 / DSM 3960 / H-6-12).